The sequence spans 119 residues: Large ribosomal subunit protein bL20 (119 aa).

It belongs to the bacterial ribosomal protein bL20 family.

Functionally, binds directly to 23S ribosomal RNA and is necessary for the in vitro assembly process of the 50S ribosomal subunit. It is not involved in the protein synthesizing functions of that subunit. This is Large ribosomal subunit protein bL20 from Dehalococcoides mccartyi (strain ATCC BAA-2100 / JCM 16839 / KCTC 5957 / BAV1).